Consider the following 175-residue polypeptide: Large ribosomal subunit protein uL10 (175 aa).

Belongs to the universal ribosomal protein uL10 family. Part of the ribosomal stalk of the 50S ribosomal subunit. The N-terminus interacts with L11 and the large rRNA to form the base of the stalk. The C-terminus forms an elongated spine to which L12 dimers bind in a sequential fashion forming a multimeric L10(L12)X complex.

Functionally, forms part of the ribosomal stalk, playing a central role in the interaction of the ribosome with GTP-bound translation factors. This chain is Large ribosomal subunit protein uL10, found in Prochlorococcus marinus (strain NATL1A).